A 271-amino-acid polypeptide reads, in one-letter code: MKI67 FHA domain-interacting nucleolar phosphoprotein (271 aa).

Positions 1–20 (MAEYSGPAKPTLALNPREDS) are disordered. At Ala-2 the chain carries N-acetylalanine. Lys-37 is covalently cross-linked (Glycyl lysine isopeptide (Lys-Gly) (interchain with G-Cter in SUMO2)). Positions 44–122 (GVVYLGHLPS…RLLSCKFMPR (79 aa)) constitute an RRM domain. Arg-113 carries the omega-N-methylarginine modification. Glycyl lysine isopeptide (Lys-Gly) (interchain with G-Cter in SUMO2) cross-links involve residues Lys-178 and Lys-191. Residues Thr-213 and Thr-217 each carry the phosphothreonine modification. Residues Arg-223 and Arg-224 each carry the omega-N-methylated arginine modification. A Phosphoserine modification is found at Ser-226. Residues 242-271 (PVSPVKEDTQKTPAPESSGKKRLRKRKSKQ) form a disordered region. Residue Lys-247 forms a Glycyl lysine isopeptide (Lys-Gly) (interchain with G-Cter in SUMO1); alternate linkage. Lys-247 is covalently cross-linked (Glycyl lysine isopeptide (Lys-Gly) (interchain with G-Cter in SUMO2); alternate). A compositionally biased stretch (basic residues) spans 261 to 271 (KKRLRKRKSKQ).

In terms of assembly, binds to the FHA domain of MKI67; this interaction is enhanced in mitosis. In terms of processing, phosphorylated.

Its subcellular location is the nucleus. The protein localises to the nucleolus. It localises to the chromosome. This is MKI67 FHA domain-interacting nucleolar phosphoprotein (Nifk) from Rattus norvegicus (Rat).